A 259-amino-acid chain; its full sequence is L-ornithine N(alpha)-acyltransferase (259 aa).

The protein belongs to the acetyltransferase family. OlsB subfamily.

It catalyses the reaction a (3R)-hydroxyacyl-[ACP] + L-ornithine = a lyso-ornithine lipid + holo-[ACP] + H(+). It participates in lipid metabolism. Catalyzes the first step in the biosynthesis of ornithine lipids, which are phosphorus-free membrane lipids. Catalyzes the 3-hydroxyacyl-acyl carrier protein-dependent acylation of ornithine to form lyso-ornithine lipid (LOL). This is L-ornithine N(alpha)-acyltransferase from Rhodobacter capsulatus (strain ATCC BAA-309 / NBRC 16581 / SB1003).